A 337-amino-acid chain; its full sequence is Quinolinate synthase (337 aa).

The iminosuccinate site is built by His40 and Ser57. [4Fe-4S] cluster is bound at residue Cys102. Residues 128-130 and Ser145 each bind iminosuccinate; that span reads YVN. Cys189 is a binding site for [4Fe-4S] cluster. Residues 215–217 and Thr243 contribute to the iminosuccinate site; that span reads HPE. Cys288 is a binding site for [4Fe-4S] cluster.

The protein belongs to the quinolinate synthase family. Type 2 subfamily. [4Fe-4S] cluster serves as cofactor.

It is found in the cytoplasm. It catalyses the reaction iminosuccinate + dihydroxyacetone phosphate = quinolinate + phosphate + 2 H2O + H(+). It participates in cofactor biosynthesis; NAD(+) biosynthesis; quinolinate from iminoaspartate: step 1/1. In terms of biological role, catalyzes the condensation of iminoaspartate with dihydroxyacetone phosphate to form quinolinate. In Mycobacterium sp. (strain JLS), this protein is Quinolinate synthase.